A 651-amino-acid chain; its full sequence is Acetyl-coenzyme A synthetase (651 aa).

CoA is bound by residues 193 to 196 (RAGR), T313, and N337. ATP contacts are provided by residues 389-391 (GEP), 413-418 (DTWWQT), D502, and R517. CoA is bound at residue S525. Residue R528 participates in ATP binding. The Mg(2+) site is built by V539, H541, and V544. R586 serves as a coordination point for CoA. Position 611 is an N6-acetyllysine (K611).

Belongs to the ATP-dependent AMP-binding enzyme family. Mg(2+) serves as cofactor. In terms of processing, acetylated. Deacetylation by the SIR2-homolog deacetylase activates the enzyme.

The enzyme catalyses acetate + ATP + CoA = acetyl-CoA + AMP + diphosphate. Functionally, catalyzes the conversion of acetate into acetyl-CoA (AcCoA), an essential intermediate at the junction of anabolic and catabolic pathways. AcsA undergoes a two-step reaction. In the first half reaction, AcsA combines acetate with ATP to form acetyl-adenylate (AcAMP) intermediate. In the second half reaction, it can then transfer the acetyl group from AcAMP to the sulfhydryl group of CoA, forming the product AcCoA. In Shewanella denitrificans (strain OS217 / ATCC BAA-1090 / DSM 15013), this protein is Acetyl-coenzyme A synthetase.